The sequence spans 878 residues: Alanine--tRNA ligase (878 aa).

Residues histidine 567, histidine 571, cysteine 669, and histidine 673 each coordinate Zn(2+).

This sequence belongs to the class-II aminoacyl-tRNA synthetase family. It depends on Zn(2+) as a cofactor.

The protein localises to the cytoplasm. The enzyme catalyses tRNA(Ala) + L-alanine + ATP = L-alanyl-tRNA(Ala) + AMP + diphosphate. Catalyzes the attachment of alanine to tRNA(Ala) in a two-step reaction: alanine is first activated by ATP to form Ala-AMP and then transferred to the acceptor end of tRNA(Ala). Also edits incorrectly charged Ser-tRNA(Ala) and Gly-tRNA(Ala) via its editing domain. The protein is Alanine--tRNA ligase of Rickettsia massiliae (strain Mtu5).